The primary structure comprises 457 residues: Bifunctional protein GlmU (457 aa).

The tract at residues 1-236 is pyrophosphorylase; it reads MDQDACTHSA…DWHFLGVNTP (236 aa). Residues 14–17, Lys28, Gln79, and 84–85 contribute to the UDP-N-acetyl-alpha-D-glucosamine site; these read LAAG and GT. Position 110 (Asp110) interacts with Mg(2+). Positions 145, 159, 176, and 234 each coordinate UDP-N-acetyl-alpha-D-glucosamine. Asn234 serves as a coordination point for Mg(2+). Positions 237–257 are linker; that stretch reads KDLSYVESIQQAFIIEKLLQS. The interval 258–457 is N-acetyltransferase; the sequence is GVIIHSPESV…GKQKNFSKRK (200 aa). Residues Arg340 and Lys358 each coordinate UDP-N-acetyl-alpha-D-glucosamine. His370 acts as the Proton acceptor in catalysis. The UDP-N-acetyl-alpha-D-glucosamine site is built by Tyr373 and Asn384. Acetyl-CoA-binding positions include Ala387, 393-394, Ser412, Ala430, and Arg447; that span reads NY.

The protein in the N-terminal section; belongs to the N-acetylglucosamine-1-phosphate uridyltransferase family. It in the C-terminal section; belongs to the transferase hexapeptide repeat family. In terms of assembly, homotrimer. Mg(2+) serves as cofactor.

It localises to the cytoplasm. The catalysed reaction is alpha-D-glucosamine 1-phosphate + acetyl-CoA = N-acetyl-alpha-D-glucosamine 1-phosphate + CoA + H(+). The enzyme catalyses N-acetyl-alpha-D-glucosamine 1-phosphate + UTP + H(+) = UDP-N-acetyl-alpha-D-glucosamine + diphosphate. The protein operates within nucleotide-sugar biosynthesis; UDP-N-acetyl-alpha-D-glucosamine biosynthesis; N-acetyl-alpha-D-glucosamine 1-phosphate from alpha-D-glucosamine 6-phosphate (route II): step 2/2. It functions in the pathway nucleotide-sugar biosynthesis; UDP-N-acetyl-alpha-D-glucosamine biosynthesis; UDP-N-acetyl-alpha-D-glucosamine from N-acetyl-alpha-D-glucosamine 1-phosphate: step 1/1. It participates in bacterial outer membrane biogenesis; LPS lipid A biosynthesis. Its function is as follows. Catalyzes the last two sequential reactions in the de novo biosynthetic pathway for UDP-N-acetylglucosamine (UDP-GlcNAc). The C-terminal domain catalyzes the transfer of acetyl group from acetyl coenzyme A to glucosamine-1-phosphate (GlcN-1-P) to produce N-acetylglucosamine-1-phosphate (GlcNAc-1-P), which is converted into UDP-GlcNAc by the transfer of uridine 5-monophosphate (from uridine 5-triphosphate), a reaction catalyzed by the N-terminal domain. The polypeptide is Bifunctional protein GlmU (Lawsonia intracellularis (strain PHE/MN1-00)).